The sequence spans 459 residues: tRNA modification GTPase MnmE (459 aa).

Residues Arg-22, Glu-85, and Arg-124 each coordinate (6S)-5-formyl-5,6,7,8-tetrahydrofolate. One can recognise a TrmE-type G domain in the interval 221 to 380 (GLSTVIVGKP…LELQIRDLFF (160 aa)). Residue Asn-231 coordinates K(+). Residues 231-236 (NVGKSS), 250-256 (TEVAGTT), and 275-278 (DTAG) contribute to the GTP site. Ser-235 serves as a coordination point for Mg(2+). Residues Thr-250, Val-252, and Thr-255 each coordinate K(+). Thr-256 contributes to the Mg(2+) binding site. Lys-459 provides a ligand contact to (6S)-5-formyl-5,6,7,8-tetrahydrofolate.

It belongs to the TRAFAC class TrmE-Era-EngA-EngB-Septin-like GTPase superfamily. TrmE GTPase family. Homodimer. Heterotetramer of two MnmE and two MnmG subunits. K(+) is required as a cofactor.

The protein localises to the cytoplasm. Its function is as follows. Exhibits a very high intrinsic GTPase hydrolysis rate. Involved in the addition of a carboxymethylaminomethyl (cmnm) group at the wobble position (U34) of certain tRNAs, forming tRNA-cmnm(5)s(2)U34. In Staphylococcus haemolyticus (strain JCSC1435), this protein is tRNA modification GTPase MnmE.